We begin with the raw amino-acid sequence, 122 residues long: Histone H2B (122 aa).

Positions Met-1–Lys-31 are disordered. Residue Pro-2 is modified to N,N-dimethylproline. Gln-10 is covalently cross-linked (Isoglutamyl lysine isopeptide (Gln-Lys) (interchain with K-5 in histone H4)). Ser-109 carries O-linked (GlcNAc) serine glycosylation. A Glycyl lysine isopeptide (Lys-Gly) (interchain with G-Cter in ubiquitin) cross-link involves residue Lys-117.

The protein belongs to the histone H2B family. In terms of assembly, the nucleosome is a histone octamer containing two molecules each of H2A, H2B, H3 and H4 assembled in one H3-H4 heterotetramer and two H2A-H2B heterodimers. The octamer wraps approximately 147 bp of DNA. In terms of processing, monoubiquitination of Lys-117 gives a specific tag for epigenetic transcriptional activation and is also prerequisite for histone H3 'Lys-4' and 'Lys-79' methylation. GlcNAcylation at Ser-109 promotes monoubiquitination of Lys-117. It fluctuates in response to extracellular glucose, and associates with transcribed genes.

Its subcellular location is the nucleus. It localises to the chromosome. Core component of nucleosome. Nucleosomes wrap and compact DNA into chromatin, limiting DNA accessibility to the cellular machineries which require DNA as a template. Histones thereby play a central role in transcription regulation, DNA repair, DNA replication and chromosomal stability. DNA accessibility is regulated via a complex set of post-translational modifications of histones, also called histone code, and nucleosome remodeling. In Patiria pectinifera (Starfish), this protein is Histone H2B.